Consider the following 472-residue polypeptide: Ribulose bisphosphate carboxylase large chain 1 (472 aa).

2 residues coordinate substrate: Asn-115 and Thr-165. Residue Lys-167 is the Proton acceptor of the active site. Lys-169 contributes to the substrate binding site. Mg(2+)-binding residues include Lys-193, Asp-195, and Glu-196. N6-carboxylysine is present on Lys-193. Residue His-286 is the Proton acceptor of the active site. Substrate-binding residues include Arg-287, His-319, and Ser-371.

The protein belongs to the RuBisCO large chain family. Type I subfamily. In terms of assembly, heterohexadecamer of 8 large chains and 8 small chains. The cofactor is Mg(2+).

The catalysed reaction is 2 (2R)-3-phosphoglycerate + 2 H(+) = D-ribulose 1,5-bisphosphate + CO2 + H2O. It catalyses the reaction D-ribulose 1,5-bisphosphate + O2 = 2-phosphoglycolate + (2R)-3-phosphoglycerate + 2 H(+). Its function is as follows. RuBisCO catalyzes two reactions: the carboxylation of D-ribulose 1,5-bisphosphate, the primary event in carbon dioxide fixation, as well as the oxidative fragmentation of the pentose substrate. Both reactions occur simultaneously and in competition at the same active site. The polypeptide is Ribulose bisphosphate carboxylase large chain 1 (Hydrogenovibrio marinus).